A 236-amino-acid chain; its full sequence is Mitochondrial inner membrane protease ATP23 (236 aa).

Histidine 136 is an a divalent metal cation binding site. Glutamate 137 is a catalytic residue. Histidine 140 contacts a divalent metal cation.

It belongs to the peptidase M76 family.

The protein resides in the mitochondrion inner membrane. Has a dual role in the assembly of mitochondrial ATPase. Acts as a protease that removes N-terminal residues of mitochondrial ATPase CF(0) subunit 6 at the intermembrane space side. Also involved in the correct assembly of the membrane-embedded ATPase CF(0) particle, probably mediating association of subunit 6 with the subunit 9 ring. The chain is Mitochondrial inner membrane protease ATP23 (ATP23) from Debaryomyces hansenii (strain ATCC 36239 / CBS 767 / BCRC 21394 / JCM 1990 / NBRC 0083 / IGC 2968) (Yeast).